The sequence spans 95 residues: Late cornified envelope protein 7A (95 aa).

The protein belongs to the LCE family.

Precursors of the cornified envelope of the stratum corneum. In Homo sapiens (Human), this protein is Late cornified envelope protein 7A.